The primary structure comprises 585 residues: uncharacterized protein (585 aa).

Residues 1–18 (MSALSTKLEPTNSYSESL) are compositionally biased toward polar residues. The tract at residues 1-23 (MSALSTKLEPTNSYSESLPPQRR) is disordered.

This sequence belongs to the protein kinase superfamily. ADCK protein kinase family.

This is an uncharacterized protein from Synechocystis sp. (strain ATCC 27184 / PCC 6803 / Kazusa).